A 320-amino-acid polypeptide reads, in one-letter code: Beta-sarcoglycan (320 aa).

A compositionally biased stretch (low complexity) spans 1 to 10 (MAAAAAAAAA). A disordered region spans residues 1–34 (MAAAAAAAAATEQQSSNGPVKKSMREKAVERRNV). At 1-67 (MAAAAAAAAA…GLRGRKGNLA (67 aa)) the chain is on the cytoplasmic side. Over residues 23 to 34 (SMREKAVERRNV) the composition is skewed to basic and acidic residues. A helical; Signal-anchor for type II membrane protein membrane pass occupies residues 68–88 (ICVIVLLFILAVINLLITLVI). The Extracellular segment spans residues 89–320 (WAVIRIGPNG…VADNPCGNTH (232 aa)). Residues Asn-160, Asn-213, and Asn-260 are each glycosylated (N-linked (GlcNAc...) asparagine). 2 disulfide bridges follow: Cys-290–Cys-316 and Cys-292–Cys-309.

This sequence belongs to the sarcoglycan beta/delta/gamma/zeta family. In terms of assembly, cross-link to form 2 major subcomplexes: one consisting of SGCB, SGCD and SGCG and the other consisting of SGCB and SGCD. The association between SGCB and SGCG is particularly strong while SGCA is loosely associated with the other sarcoglycans. Post-translationally, disulfide bonds are present.

The protein localises to the cell membrane. The protein resides in the sarcolemma. It is found in the cytoplasm. It localises to the cytoskeleton. Its function is as follows. Component of the sarcoglycan complex, a subcomplex of the dystrophin-glycoprotein complex which forms a link between the F-actin cytoskeleton and the extracellular matrix. The chain is Beta-sarcoglycan (SGCB) from Mesocricetus auratus (Golden hamster).